Here is a 283-residue protein sequence, read N- to C-terminus: Pantothenate synthetase (283 aa).

30-37 (MGALHEGH) serves as a coordination point for ATP. Residue His-37 is the Proton donor of the active site. (R)-pantoate is bound at residue Gln-61. Gln-61 contacts beta-alanine. Residue 149-152 (GEKD) coordinates ATP. A (R)-pantoate-binding site is contributed by Gln-155. ATP-binding positions include Leu-178 and 186 to 189 (RSSR).

The protein belongs to the pantothenate synthetase family. Homodimer.

It localises to the cytoplasm. The catalysed reaction is (R)-pantoate + beta-alanine + ATP = (R)-pantothenate + AMP + diphosphate + H(+). The protein operates within cofactor biosynthesis; (R)-pantothenate biosynthesis; (R)-pantothenate from (R)-pantoate and beta-alanine: step 1/1. Functionally, catalyzes the condensation of pantoate with beta-alanine in an ATP-dependent reaction via a pantoyl-adenylate intermediate. The chain is Pantothenate synthetase from Christiangramia forsetii (strain DSM 17595 / CGMCC 1.15422 / KT0803) (Gramella forsetii).